The chain runs to 123 residues: Small ribosomal subunit protein uS12 (123 aa).

The disordered stretch occupies residues 1 to 28 (MPTIQQLIRKPRQPKVKRSKSMHLEQCP). The segment covering 9 to 21 (RKPRQPKVKRSKS) has biased composition (basic residues). At aspartate 89 the chain carries 3-methylthioaspartic acid.

Belongs to the universal ribosomal protein uS12 family. As to quaternary structure, part of the 30S ribosomal subunit. Contacts proteins S8 and S17. May interact with IF1 in the 30S initiation complex.

Functionally, with S4 and S5 plays an important role in translational accuracy. Its function is as follows. Interacts with and stabilizes bases of the 16S rRNA that are involved in tRNA selection in the A site and with the mRNA backbone. Located at the interface of the 30S and 50S subunits, it traverses the body of the 30S subunit contacting proteins on the other side and probably holding the rRNA structure together. The combined cluster of proteins S8, S12 and S17 appears to hold together the shoulder and platform of the 30S subunit. The chain is Small ribosomal subunit protein uS12 from Ruegeria sp. (strain TM1040) (Silicibacter sp.).